A 241-amino-acid chain; its full sequence is NAD-dependent protein deacylase (241 aa).

The region spanning 1–237 (MNFPYRNIVV…PKLVDEILAL (237 aa)) is the Deacetylase sirtuin-type domain. 13 to 32 (GAGISAESGIQTFRAQDGLW) serves as a coordination point for NAD(+). The substrate site is built by tyrosine 57 and arginine 60. 94 to 97 (QNID) is an NAD(+) binding site. The active-site Proton acceptor is the histidine 112. The Zn(2+) site is built by cysteine 120 and cysteine 139. Residues 179–181 (GTS), 205–207 (NLE), and alanine 223 each bind NAD(+).

It belongs to the sirtuin family. Class III subfamily. In terms of assembly, monomer. Zn(2+) is required as a cofactor.

It is found in the cytoplasm. It localises to the host cytoplasm. The protein resides in the host cytosol. Its subcellular location is the host nucleus. It carries out the reaction N(6)-acetyl-L-lysyl-[protein] + NAD(+) + H2O = 2''-O-acetyl-ADP-D-ribose + nicotinamide + L-lysyl-[protein]. It catalyses the reaction N(6)-succinyl-L-lysyl-[protein] + NAD(+) + H2O = 2''-O-succinyl-ADP-D-ribose + nicotinamide + L-lysyl-[protein]. In terms of biological role, NAD-dependent lysine deacetylase and desuccinylase that specifically removes acetyl and succinyl groups on target proteins. Modulates the activities of several proteins which are inactive in their acylated form. In the intracellular pathogen V.parahaemolyticus, this enzyme regulates host response during infection by induction of host histone deacetylation; it specifically causes deacetylation of histone lysine residues H3K56, H3K9, H3K18 and H4K16 which results in transcriptional repression of several host genes involved in epigenetic regulation, immune response, and autophagy. This chain is NAD-dependent protein deacylase, found in Vibrio parahaemolyticus serotype O3:K6 (strain RIMD 2210633).